We begin with the raw amino-acid sequence, 184 residues long: Gremlin-1 (184 aa).

The signal sequence occupies residues 1–24; that stretch reads MVRTLYAIGAVFLLTGFLLPTAEG. The segment at 24 to 77 is disordered; the sequence is GRKRNRGSQGAIPPPDKDQPNDSEQMQTQQQSGSRHRERGKGTSMPAEEVLESS. N-linked (GlcNAc...) asparagine glycosylation is present at Asn-44. The segment covering 45–56 has biased composition (polar residues); it reads DSEQMQTQQQSG. 4 disulfides stabilise this stretch: Cys-94–Cys-144, Cys-108–Cys-158, Cys-118–Cys-176, and Cys-122–Cys-178. The CTCK domain maps to 94 to 184; it reads CKTQPLKQTI…ECRCISIDLD (91 aa).

The protein belongs to the DAN family.

Its subcellular location is the secreted. Its function is as follows. Cytokine that may play a role in the development of the medial pallium and during optic nerve and pecten development by modulating BMP signaling. The protein is Gremlin-1 (GREM1) of Gallus gallus (Chicken).